A 148-amino-acid polypeptide reads, in one-letter code: Single-stranded DNA-binding protein, mitochondrial (148 aa).

A mitochondrion-targeting transit peptide spans 1–16 (MFRRPVLQVLRQFVRH). The SSB domain occupies 30–141 (LNRVHLLGRV…IIADNIIFLS (112 aa)). 2 positions are modified to phosphoserine: serine 67 and serine 79. Lysine 113 carries the N6-acetyllysine modification. N6-succinyllysine is present on lysine 122.

In terms of assembly, homotetramer. Interacts with MPG/AAG, through inhibition of its glycosylase activity it potentially prevents formation of DNA breaks in ssDNA, ensuring that base removal primarily occurs in dsDNA. Interacts with POLDIP2. Interacts with PRIMPOL.

It localises to the mitochondrion. Its subcellular location is the mitochondrion matrix. It is found in the mitochondrion nucleoid. Binds preferentially and cooperatively to pyrimidine rich single-stranded DNA (ss-DNA). In vitro, required to maintain the copy number of mitochondrial DNA (mtDNA) and plays a crucial role during mtDNA replication by stimulating the activity of the replisome components POLG and TWNK at the replication fork. Promotes the activity of the gamma complex polymerase POLG, largely by organizing the template DNA and eliminating secondary structures to favor ss-DNA conformations that facilitate POLG activity. In addition it is able to promote the 5'-3' unwinding activity of the mtDNA helicase TWNK. May also function in mtDNA repair. This Pongo abelii (Sumatran orangutan) protein is Single-stranded DNA-binding protein, mitochondrial (SSBP1).